A 77-amino-acid polypeptide reads, in one-letter code: UPF0401 protein c0279 (77 aa).

This sequence belongs to the UPF0401 family.

This Escherichia coli O6:H1 (strain CFT073 / ATCC 700928 / UPEC) protein is UPF0401 protein c0279.